An 82-amino-acid chain; its full sequence is Exodeoxyribonuclease 7 small subunit (82 aa).

Belongs to the XseB family. Heterooligomer composed of large and small subunits.

It is found in the cytoplasm. It carries out the reaction Exonucleolytic cleavage in either 5'- to 3'- or 3'- to 5'-direction to yield nucleoside 5'-phosphates.. In terms of biological role, bidirectionally degrades single-stranded DNA into large acid-insoluble oligonucleotides, which are then degraded further into small acid-soluble oligonucleotides. The chain is Exodeoxyribonuclease 7 small subunit from Mycobacterium marinum (strain ATCC BAA-535 / M).